We begin with the raw amino-acid sequence, 34 residues long: DDIT3 upstream open reading frame protein (34 aa).

In terms of assembly, interacts with DDIT3 (isoform 1).

The protein localises to the nucleus. It localises to the cytoplasm. Its function is as follows. Product of the upstream open reading frame (uORF) of DDIT3/CHOP that is specifically produced in absence of stress, thereby preventing translation of downstream stress effector DDIT3/CHOP. The polypeptide is DDIT3 upstream open reading frame protein (Homo sapiens (Human)).